The sequence spans 449 residues: Tubulin alpha-2 chain (449 aa).

Residue Gln-11 participates in GTP binding. At Lys-40 the chain carries N6-acetyllysine. Positions 140, 144, 145, 179, 206, and 228 each coordinate GTP. Glu-254 is a catalytic residue.

This sequence belongs to the tubulin family. Dimer of alpha and beta chains. A typical microtubule is a hollow water-filled tube with an outer diameter of 25 nm and an inner diameter of 15 nM. Alpha-beta heterodimers associate head-to-tail to form protofilaments running lengthwise along the microtubule wall with the beta-tubulin subunit facing the microtubule plus end conferring a structural polarity. Microtubules usually have 13 protofilaments but different protofilament numbers can be found in some organisms and specialized cells. Acetylation of alpha chains at Lys-40 stabilizes microtubules and affects affinity and processivity of microtubule motors. This modification has a role in multiple cellular functions, ranging from cell motility, cell cycle progression or cell differentiation to intracellular trafficking and signaling.

It is found in the cytoplasm. The protein resides in the cytoskeleton. It catalyses the reaction GTP + H2O = GDP + phosphate + H(+). Its function is as follows. Tubulin is the major constituent of microtubules, a cylinder consisting of laterally associated linear protofilaments composed of alpha- and beta-tubulin heterodimers. Microtubules grow by the addition of GTP-tubulin dimers to the microtubule end, where a stabilizing cap forms. Below the cap, tubulin dimers are in GDP-bound state, owing to GTPase activity of alpha-tubulin. The chain is Tubulin alpha-2 chain from Stylonychia lemnae (Ciliate).